A 455-amino-acid chain; its full sequence is Bifunctional protein GlmU (455 aa).

A pyrophosphorylase region spans residues 1–232; sequence MASTTGALIL…DPNLLGVNNP (232 aa). UDP-N-acetyl-alpha-D-glucosamine contacts are provided by residues 10–13, lysine 24, glutamine 75, and 80–81; these read LAAG and GT. Aspartate 106 is a Mg(2+) binding site. Positions 141, 155, 172, and 230 each coordinate UDP-N-acetyl-alpha-D-glucosamine. Asparagine 230 is a binding site for Mg(2+). Residues 233–253 form a linker region; it reads AELIRSEALLRTRLVIGHIEG. Residues 254-455 form an N-acetyltransferase region; it reads GVLIHAPETV…QTNLPRKPKA (202 aa). UDP-N-acetyl-alpha-D-glucosamine-binding residues include arginine 336 and lysine 354. Histidine 366 functions as the Proton acceptor in the catalytic mechanism. Residues tyrosine 369 and asparagine 380 each coordinate UDP-N-acetyl-alpha-D-glucosamine. Acetyl-CoA-binding positions include alanine 383, 389–390, serine 408, alanine 426, and arginine 443; that span reads NY.

It in the N-terminal section; belongs to the N-acetylglucosamine-1-phosphate uridyltransferase family. In the C-terminal section; belongs to the transferase hexapeptide repeat family. Homotrimer. The cofactor is Mg(2+).

It localises to the cytoplasm. The catalysed reaction is alpha-D-glucosamine 1-phosphate + acetyl-CoA = N-acetyl-alpha-D-glucosamine 1-phosphate + CoA + H(+). It catalyses the reaction N-acetyl-alpha-D-glucosamine 1-phosphate + UTP + H(+) = UDP-N-acetyl-alpha-D-glucosamine + diphosphate. It functions in the pathway nucleotide-sugar biosynthesis; UDP-N-acetyl-alpha-D-glucosamine biosynthesis; N-acetyl-alpha-D-glucosamine 1-phosphate from alpha-D-glucosamine 6-phosphate (route II): step 2/2. It participates in nucleotide-sugar biosynthesis; UDP-N-acetyl-alpha-D-glucosamine biosynthesis; UDP-N-acetyl-alpha-D-glucosamine from N-acetyl-alpha-D-glucosamine 1-phosphate: step 1/1. Its pathway is bacterial outer membrane biogenesis; LPS lipid A biosynthesis. Its function is as follows. Catalyzes the last two sequential reactions in the de novo biosynthetic pathway for UDP-N-acetylglucosamine (UDP-GlcNAc). The C-terminal domain catalyzes the transfer of acetyl group from acetyl coenzyme A to glucosamine-1-phosphate (GlcN-1-P) to produce N-acetylglucosamine-1-phosphate (GlcNAc-1-P), which is converted into UDP-GlcNAc by the transfer of uridine 5-monophosphate (from uridine 5-triphosphate), a reaction catalyzed by the N-terminal domain. This is Bifunctional protein GlmU from Nitratidesulfovibrio vulgaris (strain ATCC 29579 / DSM 644 / CCUG 34227 / NCIMB 8303 / VKM B-1760 / Hildenborough) (Desulfovibrio vulgaris).